Here is a 158-residue protein sequence, read N- to C-terminus: Cathelicidin-6 (158 aa).

The first 29 residues, 1–29, serve as a signal peptide directing secretion; sequence METQRASLSLGRWSLWLLLLGLALPSASA. Positions 30 to 131 are excised as a propeptide; sequence QALSYREAVL…NVTCEELQSV (102 aa). 2 disulfides stabilise this stretch: C86–C97 and C108–C125.

It belongs to the cathelicidin family.

The protein resides in the secreted. Its function is as follows. Exerts a potent antimicrobial activity against Gram-negative and Gram-positive bacteria, including methicillin-resistant Staphylococcus aureus, and fungi. The chain is Cathelicidin-6 (CATHL6) from Bos taurus (Bovine).